The chain runs to 382 residues: Chaperone protein DnaJ (382 aa).

Residues 6–70 (DYYEILGLPK…EKRAQYDRFG (65 aa)) enclose the J domain. The segment at 131-213 (GVRKDIDIPR…CGGAGRVRNK (83 aa)) adopts a CR-type zinc-finger fold. Cysteine 144, cysteine 147, cysteine 161, cysteine 164, cysteine 187, cysteine 190, cysteine 201, and cysteine 204 together coordinate Zn(2+). CXXCXGXG motif repeat units follow at residues 144-151 (CSTCSGTG), 161-168 (CPTCGGTG), 187-194 (CSTCHGRG), and 201-208 (CPVCGGAG). The interval 146-168 (TCSGTGAKPGTSPKRCPTCGGTG) is disordered. Positions 348-382 (FENLSKGKKPQEEEKSKAEKHKKGIFEKVKDAFES) are disordered. Residues 371–382 (GIFEKVKDAFES) show a composition bias toward basic and acidic residues.

It belongs to the DnaJ family. Homodimer. The cofactor is Zn(2+).

The protein localises to the cytoplasm. Functionally, participates actively in the response to hyperosmotic and heat shock by preventing the aggregation of stress-denatured proteins and by disaggregating proteins, also in an autonomous, DnaK-independent fashion. Unfolded proteins bind initially to DnaJ; upon interaction with the DnaJ-bound protein, DnaK hydrolyzes its bound ATP, resulting in the formation of a stable complex. GrpE releases ADP from DnaK; ATP binding to DnaK triggers the release of the substrate protein, thus completing the reaction cycle. Several rounds of ATP-dependent interactions between DnaJ, DnaK and GrpE are required for fully efficient folding. Also involved, together with DnaK and GrpE, in the DNA replication of plasmids through activation of initiation proteins. The sequence is that of Chaperone protein DnaJ from Methanosarcina acetivorans (strain ATCC 35395 / DSM 2834 / JCM 12185 / C2A).